Consider the following 81-residue polypeptide: Dermaseptin-B7 (81 aa).

The first 22 residues, 1–22 (MASLKKSLFLVLFLGLVSLSIC), serve as a signal peptide directing secretion. Residues 23 to 44 (EEEKRENEDEEEQEDDEQSEMK) constitute a propeptide that is removed on maturation. The tract at residues 24–48 (EEKRENEDEEEQEDDEQSEMKRGLW) is disordered. Residues 30-40 (EDEEEQEDDEQ) are compositionally biased toward acidic residues. Val-78 is subject to Valine amide. A propeptide spanning residues 80-81 (EQ) is cleaved from the precursor.

This sequence belongs to the frog skin active peptide (FSAP) family. Dermaseptin subfamily. Expressed by the skin glands.

Its subcellular location is the secreted. In terms of biological role, has antimicrobial activity. This Phyllomedusa bicolor (Two-colored leaf frog) protein is Dermaseptin-B7 (DRG1).